We begin with the raw amino-acid sequence, 446 residues long: 3-phosphoshikimate 1-carboxyvinyltransferase (446 aa).

3-phosphoshikimate contacts are provided by Lys-30, Ser-31, and Arg-35. Residue Lys-30 participates in phosphoenolpyruvate binding. Residues Gly-112 and Arg-140 each coordinate phosphoenolpyruvate. Positions 186, 187, 188, 215, 334, and 361 each coordinate 3-phosphoshikimate. Gln-188 provides a ligand contact to phosphoenolpyruvate. The Proton acceptor role is filled by Glu-334. Phosphoenolpyruvate-binding residues include Arg-365, Arg-406, and Lys-431.

It belongs to the EPSP synthase family. Monomer.

It localises to the cytoplasm. It catalyses the reaction 3-phosphoshikimate + phosphoenolpyruvate = 5-O-(1-carboxyvinyl)-3-phosphoshikimate + phosphate. It functions in the pathway metabolic intermediate biosynthesis; chorismate biosynthesis; chorismate from D-erythrose 4-phosphate and phosphoenolpyruvate: step 6/7. In terms of biological role, catalyzes the transfer of the enolpyruvyl moiety of phosphoenolpyruvate (PEP) to the 5-hydroxyl of shikimate-3-phosphate (S3P) to produce enolpyruvyl shikimate-3-phosphate and inorganic phosphate. The polypeptide is 3-phosphoshikimate 1-carboxyvinyltransferase (Streptomyces avermitilis (strain ATCC 31267 / DSM 46492 / JCM 5070 / NBRC 14893 / NCIMB 12804 / NRRL 8165 / MA-4680)).